A 237-amino-acid chain; its full sequence is MGRKWNNIKEKKASKDANTSRVYAKFGREIYVAARQGEPDPELNQSLKFVVERAKTYNVPRAIIDRAIDKAKGGDEENFDELRYEGFGPNGSMVIVDTLTNNVNRTASEVRAAFGKNGGNMGVSGSVAYMFDATAVIGVNEMSADDVLELMMEHDLDVRDVIEEDETVIVYAEPEAFHAVQTAFKAAGVEEFAVAELTMLPQNEVSLDDASQEQFEKLIDVLEDLEDVRQVYHNVEM.

Belongs to the TACO1 family. YeeN subfamily.

It localises to the cytoplasm. This is Probable transcriptional regulatory protein EAT1b_0153 from Exiguobacterium sp. (strain ATCC BAA-1283 / AT1b).